The chain runs to 227 residues: Cytochrome c oxidase subunit 2 (227 aa).

Over 1-14 (MAYPFQLGLQDATS) the chain is Mitochondrial intermembrane. The helical transmembrane segment at 15–45 (PIMEELTNFHDHTLMIVFLISSLVLYIISLM) threads the bilayer. Over 46 to 59 (LTTKLTHTSTMDAQ) the chain is Mitochondrial matrix. A helical transmembrane segment spans residues 60 to 87 (EVETIWTILPAVILILIALPSLRILYMM). Topologically, residues 88–227 (DEINNPVLTV…HFENWSTSMI (140 aa)) are mitochondrial intermembrane. Residues His161, Cys196, Glu198, Cys200, His204, and Met207 each coordinate Cu cation. Glu198 is a Mg(2+) binding site.

This sequence belongs to the cytochrome c oxidase subunit 2 family. As to quaternary structure, component of the cytochrome c oxidase (complex IV, CIV), a multisubunit enzyme composed of 14 subunits. The complex is composed of a catalytic core of 3 subunits MT-CO1, MT-CO2 and MT-CO3, encoded in the mitochondrial DNA, and 11 supernumerary subunits COX4I, COX5A, COX5B, COX6A, COX6B, COX6C, COX7A, COX7B, COX7C, COX8 and NDUFA4, which are encoded in the nuclear genome. The complex exists as a monomer or a dimer and forms supercomplexes (SCs) in the inner mitochondrial membrane with NADH-ubiquinone oxidoreductase (complex I, CI) and ubiquinol-cytochrome c oxidoreductase (cytochrome b-c1 complex, complex III, CIII), resulting in different assemblies (supercomplex SCI(1)III(2)IV(1) and megacomplex MCI(2)III(2)IV(2)). Found in a complex with TMEM177, COA6, COX18, COX20, SCO1 and SCO2. Interacts with TMEM177 in a COX20-dependent manner. Interacts with COX20. Interacts with COX16. Cu cation is required as a cofactor.

Its subcellular location is the mitochondrion inner membrane. It catalyses the reaction 4 Fe(II)-[cytochrome c] + O2 + 8 H(+)(in) = 4 Fe(III)-[cytochrome c] + 2 H2O + 4 H(+)(out). Component of the cytochrome c oxidase, the last enzyme in the mitochondrial electron transport chain which drives oxidative phosphorylation. The respiratory chain contains 3 multisubunit complexes succinate dehydrogenase (complex II, CII), ubiquinol-cytochrome c oxidoreductase (cytochrome b-c1 complex, complex III, CIII) and cytochrome c oxidase (complex IV, CIV), that cooperate to transfer electrons derived from NADH and succinate to molecular oxygen, creating an electrochemical gradient over the inner membrane that drives transmembrane transport and the ATP synthase. Cytochrome c oxidase is the component of the respiratory chain that catalyzes the reduction of oxygen to water. Electrons originating from reduced cytochrome c in the intermembrane space (IMS) are transferred via the dinuclear copper A center (CU(A)) of subunit 2 and heme A of subunit 1 to the active site in subunit 1, a binuclear center (BNC) formed by heme A3 and copper B (CU(B)). The BNC reduces molecular oxygen to 2 water molecules using 4 electrons from cytochrome c in the IMS and 4 protons from the mitochondrial matrix. The chain is Cytochrome c oxidase subunit 2 (MT-CO2) from Praomys taitae (Taita hill rat).